Consider the following 279-residue polypeptide: Digeranylgeranylglyceryl phosphate synthase (279 aa).

Helical transmembrane passes span 27–47 (LIAT…VALI), 90–110 (FVGG…IAII), 127–147 (VLGN…GGAF), 199–219 (TGIF…LPFG), 222–242 (WGLF…FGAF), and 259–279 (TSIL…AAVI).

It belongs to the UbiA prenyltransferase family. DGGGP synthase subfamily. Requires Mg(2+) as cofactor.

Its subcellular location is the cell membrane. It carries out the reaction sn-3-O-(geranylgeranyl)glycerol 1-phosphate + (2E,6E,10E)-geranylgeranyl diphosphate = 2,3-bis-O-(geranylgeranyl)-sn-glycerol 1-phosphate + diphosphate. It functions in the pathway membrane lipid metabolism; glycerophospholipid metabolism. Prenyltransferase that catalyzes the transfer of the geranylgeranyl moiety of geranylgeranyl diphosphate (GGPP) to the C2 hydroxyl of (S)-3-O-geranylgeranylglyceryl phosphate (GGGP). This reaction is the second ether-bond-formation step in the biosynthesis of archaeal membrane lipids. The sequence is that of Digeranylgeranylglyceryl phosphate synthase from Methanoculleus marisnigri (strain ATCC 35101 / DSM 1498 / JR1).